Reading from the N-terminus, the 379-residue chain is MTNIRKTHPLLKPINHALIDLPTPSNISTWWNLGSLLGTCLIMQILTGLFLAMHYSSDTTTAFSSIAHICRDVNYGWTIRHLHANGASMFFMCLYLHIGRNLYYGSYSYLETWNTGVMLLLTVMATAFMGYVLPWGQMSFWGATVITNLLSAIPYIGTDLVEWIWGGFSIEKATLTRFFTLHFIAPFIILALVLTHLLFLHETGSNNPLGISSNSDKIPFHPYHTIKDILGLLIMILTTLALTLLHPDLLGDPNNYTPANPLNTPPHIKPEWYFLFAYTILRSTPSKLGGVLTLICSILVLVIIPMTHTAKQRSLTFRPISQCLFWILTADLLILTWIGGQPMDPPFTTIGLLASILYFTTILILTPTAGLIENNLMKW.

Transmembrane regions (helical) follow at residues 33–53 (LGSL…FLAM), 77–98 (WTIR…YLHI), 113–133 (WNTG…GYVL), and 178–198 (FFTL…THLL). The heme b site is built by His-83 and His-97. Residues His-182 and His-196 each coordinate heme b. His-201 contributes to the a ubiquinone binding site. The next 4 membrane-spanning stretches (helical) occupy residues 226–246 (IKDI…TLLH), 288–308 (LGGV…PMTH), 320–340 (ISQC…WIGG), and 347–367 (FTTI…ILTP).

It belongs to the cytochrome b family. As to quaternary structure, the cytochrome bc1 complex contains 11 subunits: 3 respiratory subunits (MT-CYB, CYC1 and UQCRFS1), 2 core proteins (UQCRC1 and UQCRC2) and 6 low-molecular weight proteins (UQCRH/QCR6, UQCRB/QCR7, UQCRQ/QCR8, UQCR10/QCR9, UQCR11/QCR10 and a cleavage product of UQCRFS1). This cytochrome bc1 complex then forms a dimer. The cofactor is heme b.

It localises to the mitochondrion inner membrane. In terms of biological role, component of the ubiquinol-cytochrome c reductase complex (complex III or cytochrome b-c1 complex) that is part of the mitochondrial respiratory chain. The b-c1 complex mediates electron transfer from ubiquinol to cytochrome c. Contributes to the generation of a proton gradient across the mitochondrial membrane that is then used for ATP synthesis. This is Cytochrome b (MT-CYB) from Bradypus tridactylus (Pale-throated three-toed sloth).